Consider the following 488-residue polypeptide: Mannosylglycerate hydrolase MGH1 (488 aa).

Substrate contacts are provided by residues Y94, 98 to 101 (WNWD), Y146, Q167, and G227. Residue D229 is the Proton donor of the active site. Substrate is bound by residues R262 and 415–416 (YW). E459 functions as the Proton acceptor in the catalytic mechanism.

It belongs to the glycosyl hydrolase 63 family.

It catalyses the reaction (2R)-2-O-(alpha-D-mannosyl)-glycerate + H2O = D-mannose + (R)-glycerate. The enzyme catalyses (2R)-2-O-(alpha-D-glucopyranosyl)-glycerate + H2O = (R)-glycerate + D-glucose. Its activity is regulated as follows. Activity is not dependent on divalent cations, but it is enhanced by Mn(2+). Functionally, catalyzes the hydrolysis of alpha-D-mannosyl-glycerate (MG) to D-glycerate and D-mannose. Can also hydrolyze alpha-D-glucopyranosyl-glycerate (GG)with lower efficiency. The protein is Mannosylglycerate hydrolase MGH1 of Selaginella moellendorffii (Spikemoss).